Reading from the N-terminus, the 98-residue chain is Integration host factor subunit alpha (98 aa).

Residues 49-70 (FGNFDLRDKNQRPGRNPKTGED) form a disordered region.

This sequence belongs to the bacterial histone-like protein family. In terms of assembly, heterodimer of an alpha and a beta chain.

Its function is as follows. This protein is one of the two subunits of integration host factor, a specific DNA-binding protein that functions in genetic recombination as well as in transcriptional and translational control. The sequence is that of Integration host factor subunit alpha from Sodalis glossinidius (strain morsitans).